Here is a 337-residue protein sequence, read N- to C-terminus: Anthranilate phosphoribosyltransferase (337 aa).

Residues Gly-81, Gly-84–Asp-85, Ser-89, Asn-91–Thr-94, Lys-109–Ser-117, and Ala-121 contribute to the 5-phospho-alpha-D-ribose 1-diphosphate site. Anthranilate is bound at residue Gly-81. Position 93 (Ser-93) interacts with Mg(2+). Asn-112 is an anthranilate binding site. Arg-167 lines the anthranilate pocket. Mg(2+)-binding residues include Asp-226 and Glu-227.

This sequence belongs to the anthranilate phosphoribosyltransferase family. Homodimer. It depends on Mg(2+) as a cofactor.

It carries out the reaction N-(5-phospho-beta-D-ribosyl)anthranilate + diphosphate = 5-phospho-alpha-D-ribose 1-diphosphate + anthranilate. Its pathway is amino-acid biosynthesis; L-tryptophan biosynthesis; L-tryptophan from chorismate: step 2/5. In terms of biological role, catalyzes the transfer of the phosphoribosyl group of 5-phosphorylribose-1-pyrophosphate (PRPP) to anthranilate to yield N-(5'-phosphoribosyl)-anthranilate (PRA). The protein is Anthranilate phosphoribosyltransferase of Nitrobacter hamburgensis (strain DSM 10229 / NCIMB 13809 / X14).